Consider the following 252-residue polypeptide: 1-(5-phosphoribosyl)-5-[(5-phosphoribosylamino)methylideneamino] imidazole-4-carboxamide isomerase (252 aa).

Asp-10 acts as the Proton acceptor in catalysis. Asp-129 acts as the Proton donor in catalysis.

It belongs to the HisA/HisF family.

Its subcellular location is the cytoplasm. The enzyme catalyses 1-(5-phospho-beta-D-ribosyl)-5-[(5-phospho-beta-D-ribosylamino)methylideneamino]imidazole-4-carboxamide = 5-[(5-phospho-1-deoxy-D-ribulos-1-ylimino)methylamino]-1-(5-phospho-beta-D-ribosyl)imidazole-4-carboxamide. Its pathway is amino-acid biosynthesis; L-histidine biosynthesis; L-histidine from 5-phospho-alpha-D-ribose 1-diphosphate: step 4/9. The polypeptide is 1-(5-phosphoribosyl)-5-[(5-phosphoribosylamino)methylideneamino] imidazole-4-carboxamide isomerase (Frankia casuarinae (strain DSM 45818 / CECT 9043 / HFP020203 / CcI3)).